The primary structure comprises 160 residues: Cyanate hydratase (160 aa).

Catalysis depends on residues Arg100, Glu103, and Ser126.

It belongs to the cyanase family.

It catalyses the reaction cyanate + hydrogencarbonate + 3 H(+) = NH4(+) + 2 CO2. Its function is as follows. Catalyzes the reaction of cyanate with bicarbonate to produce ammonia and carbon dioxide. This is Cyanate hydratase from Emericella nidulans (strain FGSC A4 / ATCC 38163 / CBS 112.46 / NRRL 194 / M139) (Aspergillus nidulans).